The following is a 610-amino-acid chain: Protein Spindly-B (610 aa).

Positions 1 to 392 (MEESETVLKL…IDKVKDELSL (392 aa)) form a coiled coil. Residues 474–610 (TEAHGVSDAT…KPATAQCPQQ (137 aa)) form a disordered region. Composition is skewed to basic and acidic residues over residues 493-511 (SDDK…KDQD) and 535-548 (RIME…DLNK). Polar residues predominate over residues 549 to 561 (RNPNNCTITSIHP). Over residues 570–583 (SELKKVDEEQEKRK) the composition is skewed to basic and acidic residues.

This sequence belongs to the Spindly family.

It is found in the chromosome. The protein resides in the centromere. The protein localises to the kinetochore. Its function is as follows. Required for the localization of dynein and dynactin to the mitotic kintochore. Dynein is believed to control the initial lateral interaction between the kinetochore and spindle microtubules and to facilitate the subsequent formation of end-on kinetochore-microtubule attachments mediated by the NDC80 complex. This Xenopus laevis (African clawed frog) protein is Protein Spindly-B (spdl1-b).